The following is a 224-amino-acid chain: Glutathione S-transferase U8 (224 aa).

In terms of domain architecture, GST N-terminal spans 5–85; sequence EHVKLLGLWG…YIEDTWKTTH (81 aa). Glutathione-binding positions include 15–16, 42–43, 56–57, and 69–70; these read SP, NR, KV, and ES. The region spanning 91–213 is the GST C-terminal domain; it reads DPYERAMARF…LPPKEKLVAV (123 aa). T152 is modified (phosphothreonine).

It belongs to the GST superfamily. Tau family.

The protein resides in the cytoplasm. It localises to the cytosol. The catalysed reaction is RX + glutathione = an S-substituted glutathione + a halide anion + H(+). Its function is as follows. May be involved in the conjugation of reduced glutathione to a wide number of exogenous and endogenous hydrophobic electrophiles and have a detoxification role against certain herbicides. In Arabidopsis thaliana (Mouse-ear cress), this protein is Glutathione S-transferase U8 (GSTU8).